The sequence spans 147 residues: Small ribosomal subunit protein uS12 (147 aa).

The protein belongs to the universal ribosomal protein uS12 family. Part of the 30S ribosomal subunit.

Its function is as follows. With S4 and S5 plays an important role in translational accuracy. Located at the interface of the 30S and 50S subunits. The protein is Small ribosomal subunit protein uS12 of Staphylothermus marinus (strain ATCC 43588 / DSM 3639 / JCM 9404 / F1).